Here is a 186-residue protein sequence, read N- to C-terminus: Peptidyl-tRNA hydrolase (186 aa).

Tyr-13 contributes to the tRNA binding site. The Proton acceptor role is filled by His-18. Positions 59, 61, and 107 each coordinate tRNA.

It belongs to the PTH family. In terms of assembly, monomer.

The protein resides in the cytoplasm. It catalyses the reaction an N-acyl-L-alpha-aminoacyl-tRNA + H2O = an N-acyl-L-amino acid + a tRNA + H(+). Its function is as follows. Hydrolyzes ribosome-free peptidyl-tRNAs (with 1 or more amino acids incorporated), which drop off the ribosome during protein synthesis, or as a result of ribosome stalling. Catalyzes the release of premature peptidyl moieties from peptidyl-tRNA molecules trapped in stalled 50S ribosomal subunits, and thus maintains levels of free tRNAs and 50S ribosomes. In Thermotoga maritima (strain ATCC 43589 / DSM 3109 / JCM 10099 / NBRC 100826 / MSB8), this protein is Peptidyl-tRNA hydrolase.